The sequence spans 359 residues: UPF0283 membrane protein RHECIAT_CH0002430 (359 aa).

Residues 1–50 are disordered; it reads MSKPPSDPPRRPPAAFAYEDEASEPRNSGRQQQGRRKPESFSENIVVTPD. The next 2 helical transmembrane spans lie at 77–97 and 111–131; these read FGKI…GLWT and LGYA…ALVI.

The protein belongs to the UPF0283 family.

It localises to the cell inner membrane. The sequence is that of UPF0283 membrane protein RHECIAT_CH0002430 from Rhizobium etli (strain CIAT 652).